Here is a 470-residue protein sequence, read N- to C-terminus: ATP synthase subunit beta (470 aa).

ATP is bound at residue 155-162; it reads GGAGVGKT.

It belongs to the ATPase alpha/beta chains family. In terms of assembly, F-type ATPases have 2 components, CF(1) - the catalytic core - and CF(0) - the membrane proton channel. CF(1) has five subunits: alpha(3), beta(3), gamma(1), delta(1), epsilon(1). CF(0) has three main subunits: a(1), b(2) and c(9-12). The alpha and beta chains form an alternating ring which encloses part of the gamma chain. CF(1) is attached to CF(0) by a central stalk formed by the gamma and epsilon chains, while a peripheral stalk is formed by the delta and b chains.

The protein resides in the cell inner membrane. The enzyme catalyses ATP + H2O + 4 H(+)(in) = ADP + phosphate + 5 H(+)(out). In terms of biological role, produces ATP from ADP in the presence of a proton gradient across the membrane. The catalytic sites are hosted primarily by the beta subunits. The polypeptide is ATP synthase subunit beta (Oleidesulfovibrio alaskensis (strain ATCC BAA-1058 / DSM 17464 / G20) (Desulfovibrio alaskensis)).